The sequence spans 416 residues: MNILDELAWRGAINQVSDEEGLRKLLDKKSVGLYCGVDPTGDSLHIGHLIPFMMLKRFQEAGHRAHIIIGGGTGSIGDPSGKKSERVLQTMEQVHHNEEALTKQMKHLFGKDNITIVNNRDWLSKIDLLGFLRDYGKLFNVNTMLNKEVVASRLEVGISFTEFTYQILQSIDFHHLWKNNDVQLQIGGADQWGNITSGIDLIHKMEGSEAEAYALTIPLMLKADGTKFGKTAGGAVWLDPEKTTPYEFYQFWLNQDDRDVIKYLKYFTFLSQEEIADLEEKVKTQPEKREAQRRLAEETVEFVHGKEAVKEAEHISAALFSGEVKDLTASEIEQGFKNMPSVEVTAEPKNIVEWLVDTGIESSKRQAREDVTNGAIRINGDRIQDLEFTIDPSAEFDGKFVIVRRGKKKYFLARVK.

L-tyrosine is bound at residue Tyr-34. Positions 39-48 match the 'HIGH' region motif; the sequence is PTGDSLHIGH. Residues Tyr-165 and Gln-169 each coordinate L-tyrosine. The 'KMSKS' region motif lies at 227 to 231; sequence KFGKT. Lys-230 is a binding site for ATP. In terms of domain architecture, S4 RNA-binding spans 349–416; that stretch reads KNIVEWLVDT…KKKYFLARVK (68 aa).

It belongs to the class-I aminoacyl-tRNA synthetase family. TyrS type 1 subfamily. In terms of assembly, homodimer.

It is found in the cytoplasm. It catalyses the reaction tRNA(Tyr) + L-tyrosine + ATP = L-tyrosyl-tRNA(Tyr) + AMP + diphosphate + H(+). Its function is as follows. Catalyzes the attachment of tyrosine to tRNA(Tyr) in a two-step reaction: tyrosine is first activated by ATP to form Tyr-AMP and then transferred to the acceptor end of tRNA(Tyr). The protein is Tyrosine--tRNA ligase of Ligilactobacillus salivarius (strain UCC118) (Lactobacillus salivarius).